We begin with the raw amino-acid sequence, 625 residues long: Alpha-1,3-galactosidase A (625 aa).

An N-terminal signal peptide occupies residues 1-32 (MAHGCSGGAMSRFVFLGVALALLGGATSPAAA). PbH1 repeat units lie at residues 342-364 (KGKV…NIHG), 460-482 (TPSV…LVTT), 483-505 (RKPV…YVSA), 516-537 (VADL…IFVE), and 573-611 (VGGF…RIAR).

The protein belongs to the glycosyl hydrolase 110 family. A subfamily.

The enzyme catalyses Hydrolysis of terminal, non-reducing branched (1-&gt;3)-alpha-D-galactosidic residues, producing free D-galactose.. The catalysed reaction is Hydrolysis of terminal, non-reducing alpha-D-galactose residues in alpha-D-galactosides, including galactose oligosaccharides, galactomannans and galactolipids.. Functionally, alpha-galactosidase that specifically removes branched alpha-1,3-linked galactose residues present in blood group B antigens. Has no activity toward linear alpha-1,3-linked galactose residues. The protein is Alpha-1,3-galactosidase A (glaA) of Streptomyces avermitilis (strain ATCC 31267 / DSM 46492 / JCM 5070 / NBRC 14893 / NCIMB 12804 / NRRL 8165 / MA-4680).